Here is a 120-residue protein sequence, read N- to C-terminus: NAD(P)H-quinone oxidoreductase subunit 3, chloroplastic (120 aa).

The next 3 membrane-spanning stretches (helical) occupy residues 7–27 (YNYF…AFSI), 64–84 (MFAL…PWAM), and 89–109 (LGIP…IGLI).

This sequence belongs to the complex I subunit 3 family. In terms of assembly, NDH is composed of at least 16 different subunits, 5 of which are encoded in the nucleus.

Its subcellular location is the plastid. It localises to the chloroplast thylakoid membrane. The catalysed reaction is a plastoquinone + NADH + (n+1) H(+)(in) = a plastoquinol + NAD(+) + n H(+)(out). It carries out the reaction a plastoquinone + NADPH + (n+1) H(+)(in) = a plastoquinol + NADP(+) + n H(+)(out). Functionally, NDH shuttles electrons from NAD(P)H:plastoquinone, via FMN and iron-sulfur (Fe-S) centers, to quinones in the photosynthetic chain and possibly in a chloroplast respiratory chain. The immediate electron acceptor for the enzyme in this species is believed to be plastoquinone. Couples the redox reaction to proton translocation, and thus conserves the redox energy in a proton gradient. This Anthoceros angustus (Hornwort) protein is NAD(P)H-quinone oxidoreductase subunit 3, chloroplastic.